Reading from the N-terminus, the 210-residue chain is Resolvase (210 aa).

The Resolvase/invertase-type recombinase catalytic domain maps to 6–150 (VARVYLRVSS…EDRRERQRQG (145 aa)). S14 acts as the O-(5'-phospho-DNA)-serine intermediate in catalysis. The segment at residues 191–210 (GVSVSQVKRVWAQNQTKDKV) is a DNA-binding region (H-T-H motif).

The protein belongs to the site-specific recombinase resolvase family.

Functionally, site-specific recombination protein. The chain is Resolvase (stbA) from Pseudomonas syringae pv. tomato.